We begin with the raw amino-acid sequence, 210 residues long: Putative biopolymer transport protein ExbB-like 3 (210 aa).

3 helical membrane passes run alanine 2–isoleucine 22, leucine 104–leucine 124, and leucine 152–phenylalanine 172.

Belongs to the ExbB/TolQ family.

It is found in the cell inner membrane. Involved in the TonB-dependent energy-dependent transport of various receptor-bound substrates. Protects ExbD from proteolytic degradation and functionally stabilizes TonB. The polypeptide is Putative biopolymer transport protein ExbB-like 3 (Synechocystis sp. (strain ATCC 27184 / PCC 6803 / Kazusa)).